The sequence spans 258 residues: Tryptophan synthase alpha chain (258 aa).

Catalysis depends on proton acceptor residues Glu-47 and Asp-58.

Belongs to the TrpA family. As to quaternary structure, tetramer of two alpha and two beta chains.

It carries out the reaction (1S,2R)-1-C-(indol-3-yl)glycerol 3-phosphate + L-serine = D-glyceraldehyde 3-phosphate + L-tryptophan + H2O. Its pathway is amino-acid biosynthesis; L-tryptophan biosynthesis; L-tryptophan from chorismate: step 5/5. Its function is as follows. The alpha subunit is responsible for the aldol cleavage of indoleglycerol phosphate to indole and glyceraldehyde 3-phosphate. This chain is Tryptophan synthase alpha chain, found in Bacillus mycoides (strain KBAB4) (Bacillus weihenstephanensis).